Here is a 136-residue protein sequence, read N- to C-terminus: Large ribosomal subunit protein uL16 (136 aa).

It belongs to the universal ribosomal protein uL16 family. As to quaternary structure, part of the 50S ribosomal subunit.

Its function is as follows. Binds 23S rRNA and is also seen to make contacts with the A and possibly P site tRNAs. This Rickettsia peacockii (strain Rustic) protein is Large ribosomal subunit protein uL16.